The sequence spans 417 residues: NADH-quinone oxidoreductase subunit D (417 aa).

Belongs to the complex I 49 kDa subunit family. As to quaternary structure, NDH-1 is composed of 14 different subunits. Subunits NuoB, C, D, E, F, and G constitute the peripheral sector of the complex.

The protein localises to the cell inner membrane. It carries out the reaction a quinone + NADH + 5 H(+)(in) = a quinol + NAD(+) + 4 H(+)(out). NDH-1 shuttles electrons from NADH, via FMN and iron-sulfur (Fe-S) centers, to quinones in the respiratory chain. The immediate electron acceptor for the enzyme in this species is believed to be ubiquinone. Couples the redox reaction to proton translocation (for every two electrons transferred, four hydrogen ions are translocated across the cytoplasmic membrane), and thus conserves the redox energy in a proton gradient. This chain is NADH-quinone oxidoreductase subunit D, found in Francisella tularensis subsp. novicida (strain U112).